The primary structure comprises 122 residues: MIQQESRLDVADNTGAREVMCIKVLGGSRRRFATVGDVIVCSVKSVIPGSEVKKKAVVRAVIVRVKQPTRRPDGSYIRFDSNAVVLVDKDRNPRGTRIFGAVARELRENNFMKIVSLANEVV.

Belongs to the universal ribosomal protein uL14 family. As to quaternary structure, part of the 50S ribosomal subunit. Forms a cluster with proteins L3 and L19. In the 70S ribosome, L14 and L19 interact and together make contacts with the 16S rRNA in bridges B5 and B8.

In terms of biological role, binds to 23S rRNA. Forms part of two intersubunit bridges in the 70S ribosome. The chain is Large ribosomal subunit protein uL14 from Rhodopirellula baltica (strain DSM 10527 / NCIMB 13988 / SH1).